The following is a 160-amino-acid chain: S-protein homolog 13 (160 aa).

The signal sequence occupies residues Met1 to Ala27.

The protein belongs to the plant self-incompatibility (S1) protein family.

It localises to the secreted. The protein is S-protein homolog 13 of Arabidopsis thaliana (Mouse-ear cress).